Here is a 197-residue protein sequence, read N- to C-terminus: Pyridoxal 5'-phosphate synthase subunit PdxT (197 aa).

Residue 53-55 participates in L-glutamine binding; it reads GES. Residue C85 is the Nucleophile of the active site. Residues R114 and 142–143 contribute to the L-glutamine site; that span reads IR. Residues H179 and E181 each act as charge relay system in the active site.

It belongs to the glutaminase PdxT/SNO family. As to quaternary structure, in the presence of PdxS, forms a dodecamer of heterodimers. Only shows activity in the heterodimer.

It carries out the reaction aldehydo-D-ribose 5-phosphate + D-glyceraldehyde 3-phosphate + L-glutamine = pyridoxal 5'-phosphate + L-glutamate + phosphate + 3 H2O + H(+). It catalyses the reaction L-glutamine + H2O = L-glutamate + NH4(+). It functions in the pathway cofactor biosynthesis; pyridoxal 5'-phosphate biosynthesis. Functionally, catalyzes the hydrolysis of glutamine to glutamate and ammonia as part of the biosynthesis of pyridoxal 5'-phosphate. The resulting ammonia molecule is channeled to the active site of PdxS. The polypeptide is Pyridoxal 5'-phosphate synthase subunit PdxT (Thermococcus onnurineus (strain NA1)).